Reading from the N-terminus, the 114-residue chain is Nuclear transition protein 2 (114 aa).

Residues 1–114 (MDTKMQSLPT…KRRSSGRRYK (114 aa)) form a disordered region. Residues His-12, His-14, His-16, His-24, Cys-29, Cys-31, Cys-35, and Cys-38 each contribute to the Zn(2+) site. Residues 16–25 (HSSSRPQSHT) show a composition bias toward low complexity. A Nuclear localization signal motif is present at residues 87-95 (GKVSKRKAV). Residues 90-114 (SKRKAVRRRKRTHRAKRRSSGRRYK) are compositionally biased toward basic residues. Thr-101 is modified (phosphothreonine; by PKA). Ser-109 is modified (phosphoserine; by PKA).

It belongs to the nuclear transition protein 2 family. Testis.

It is found in the nucleus. Its subcellular location is the nucleolus. It localises to the chromosome. Its function is as follows. Plays a key role in the replacement of histones to protamine in the elongating spermatids of mammals. In condensing spermatids, loaded onto the nucleosomes, where it promotes the recruitment and processing of protamines, which are responsible for histone eviction. The polypeptide is Nuclear transition protein 2 (Tnp2) (Rattus norvegicus (Rat)).